The primary structure comprises 314 residues: Thymidylate synthase (314 aa).

DUMP is bound by residues Arg-32 and 176–177 (RR). The Nucleophile role is filled by Cys-196. DUMP is bound by residues 216–219 (RSCD), Asn-227, and 257–259 (HLY). Asp-219 is a binding site for (6R)-5,10-methylene-5,6,7,8-tetrahydrofolate. A (6R)-5,10-methylene-5,6,7,8-tetrahydrofolate-binding site is contributed by Ala-313.

The protein belongs to the thymidylate synthase family. Bacterial-type ThyA subfamily. In terms of assembly, homodimer.

It is found in the cytoplasm. The catalysed reaction is dUMP + (6R)-5,10-methylene-5,6,7,8-tetrahydrofolate = 7,8-dihydrofolate + dTMP. It participates in pyrimidine metabolism; dTTP biosynthesis. In terms of biological role, catalyzes the reductive methylation of 2'-deoxyuridine-5'-monophosphate (dUMP) to 2'-deoxythymidine-5'-monophosphate (dTMP) while utilizing 5,10-methylenetetrahydrofolate (mTHF) as the methyl donor and reductant in the reaction, yielding dihydrofolate (DHF) as a by-product. This enzymatic reaction provides an intracellular de novo source of dTMP, an essential precursor for DNA biosynthesis. The sequence is that of Thymidylate synthase from Novosphingobium aromaticivorans (strain ATCC 700278 / DSM 12444 / CCUG 56034 / CIP 105152 / NBRC 16084 / F199).